The following is a 160-amino-acid chain: Cytochrome b6-f complex subunit 4 (160 aa).

Helical transmembrane passes span 36–56 (LLYM…GLAV), 95–115 (LLGI…PFIE), and 131–151 (AVFL…ALPI).

It belongs to the cytochrome b family. PetD subfamily. The 4 large subunits of the cytochrome b6-f complex are cytochrome b6, subunit IV (17 kDa polypeptide, PetD), cytochrome f and the Rieske protein, while the 4 small subunits are PetG, PetL, PetM and PetN. The complex functions as a dimer.

Its subcellular location is the cellular thylakoid membrane. Functionally, component of the cytochrome b6-f complex, which mediates electron transfer between photosystem II (PSII) and photosystem I (PSI), cyclic electron flow around PSI, and state transitions. In Synechococcus elongatus (strain ATCC 33912 / PCC 7942 / FACHB-805) (Anacystis nidulans R2), this protein is Cytochrome b6-f complex subunit 4.